A 232-amino-acid chain; its full sequence is Ubiquinone biosynthesis O-methyltransferase (232 aa).

Residues R36, G55, D76, and L120 each contribute to the S-adenosyl-L-methionine site.

This sequence belongs to the methyltransferase superfamily. UbiG/COQ3 family.

The enzyme catalyses a 3-demethylubiquinol + S-adenosyl-L-methionine = a ubiquinol + S-adenosyl-L-homocysteine + H(+). The catalysed reaction is a 3-(all-trans-polyprenyl)benzene-1,2-diol + S-adenosyl-L-methionine = a 2-methoxy-6-(all-trans-polyprenyl)phenol + S-adenosyl-L-homocysteine + H(+). The protein operates within cofactor biosynthesis; ubiquinone biosynthesis. In terms of biological role, O-methyltransferase that catalyzes the 2 O-methylation steps in the ubiquinone biosynthetic pathway. This chain is Ubiquinone biosynthesis O-methyltransferase, found in Pseudomonas aeruginosa (strain UCBPP-PA14).